A 586-amino-acid polypeptide reads, in one-letter code: MFS-type transporter ucsD (586 aa).

Residues 1 to 56 (MSRNSGTTLEDGPLHADPTTEAPNNATVTTNVTANDENTEKEVDADAAAAAPAEAP) form a disordered region. Composition is skewed to low complexity over residues 19-36 (TTEAPNNATVTTNVTAND) and 46-56 (DAAAAAPAEAP). Residues asparagine 25 and asparagine 31 are each glycosylated (N-linked (GlcNAc...) asparagine). The next 8 membrane-spanning stretches (helical) occupy residues 65–85 (WAIVAALAFTALLSSLEGTII), 101–121 (SFIWVPNGYFLATIVMLPLMA), 131–151 (WLTLISVATFTLGSGICGGAN), 164–184 (GFGGGGIALMINIILTDLVPL), 192–212 (GIVQMVSAVGAALGPFLGGLL), 220–240 (WVFYINLPIGGTSLVALFFFL), 263–283 (AIFIASTVSVLIGVTWGGAVY), and 290–310 (VIVPLVLGFFGLGLFVVYEWT). Asparagine 324 carries N-linked (GlcNAc...) asparagine glycosylation. 6 helical membrane-spanning segments follow: residues 330-350 (VLGVTFLHTVATYWSFYFMPI), 368-388 (LPLFAGIFPFAILGGMLLAKF), 393-413 (PMHLIGMAIITLSFGLFSLLD), 420-440 (AWACFQLLFAVGAGLMIAILL), 458-478 (VWTFVRGFGTVWGVTIPSAIF), and 532-552 (LRTVWYVGVALAGFGWLLIWL).

Belongs to the major facilitator superfamily.

It is found in the membrane. MFS-type transporter; part of the gene cluster that mediates the biosynthesis of UCS1025A, a member of the pyrrolizidinone family that acts as a strong telomerase inhibitor and displays potent antibacterial and antitumor properties. These compounds share a hemiaminal-containing pyrrolizidinone core fused with a gamma-lactone, giving a furopyrrolizidine that is connected to a decalin fragment. This is MFS-type transporter ucsD from Acremonium sp.